The chain runs to 429 residues: Serine hydroxymethyltransferase (429 aa).

(6S)-5,6,7,8-tetrahydrofolate contacts are provided by residues leucine 126 and 130–132 (GHL). Lysine 235 is subject to N6-(pyridoxal phosphate)lysine. Position 359–361 (359–361 (SPF)) interacts with (6S)-5,6,7,8-tetrahydrofolate.

The protein belongs to the SHMT family. Homodimer. The cofactor is pyridoxal 5'-phosphate.

Its subcellular location is the cytoplasm. The catalysed reaction is (6R)-5,10-methylene-5,6,7,8-tetrahydrofolate + glycine + H2O = (6S)-5,6,7,8-tetrahydrofolate + L-serine. Its pathway is one-carbon metabolism; tetrahydrofolate interconversion. The protein operates within amino-acid biosynthesis; glycine biosynthesis; glycine from L-serine: step 1/1. Its function is as follows. Catalyzes the reversible interconversion of serine and glycine with tetrahydrofolate (THF) serving as the one-carbon carrier. This reaction serves as the major source of one-carbon groups required for the biosynthesis of purines, thymidylate, methionine, and other important biomolecules. Also exhibits THF-independent aldolase activity toward beta-hydroxyamino acids, producing glycine and aldehydes, via a retro-aldol mechanism. In Synechococcus sp. (strain WH7803), this protein is Serine hydroxymethyltransferase.